Reading from the N-terminus, the 415-residue chain is Calreticulin (415 aa).

The first 20 residues, 1 to 20 (MANPKSLSLFLLSLLAIASA), serve as a signal peptide directing secretion. Residue Asn52 is glycosylated (N-linked (GlcNAc...) asparagine). A disulfide bridge links Cys106 with Cys138. 4 residues coordinate an alpha-D-glucoside: Tyr110, Lys112, Tyr129, and Asp136. Asn152 is a glycosylation site (N-linked (GlcNAc...) asparagine). A run of 7 repeats spans residues 192 to 203 (KQTGSLYTDWDL), 211 to 222 (DPEAKKPEDWDE), 228 to 239 (DPEDKKPEGYDD), 246 to 257 (DPDAKKPEDWDD), 261 to 271 (GEWTAPTIANP), 275 to 285 (GPWKPKKIKNP), and 289 to 299 (GKWKAPMIDNP). Positions 192–257 (KQTGSLYTDW…DAKKPEDWDD (66 aa)) are 4 X approximate repeats. Positions 208–253 (KIKDPEAKKPEDWDEKEYIPDPEDKKPEGYDDIPKEIPDPDAKKPE) are enriched in basic and acidic residues. The disordered stretch occupies residues 208 to 276 (KIKDPEAKKP…TIANPEYKGP (69 aa)). The segment at 261 to 299 (GEWTAPTIANPEYKGPWKPKKIKNPNYKGKWKAPMIDNP) is 3 X approximate repeats. Residue Glu319 participates in an alpha-D-glucoside binding. Residues 347 to 376 (ETWGKNKDAEKAAFEEAEKKKEEEESKDDP) show a composition bias toward basic and acidic residues. The interval 347 to 415 (ETWGKNKDAE…DSAEDVHDEL (69 aa)) is disordered. 2 stretches are compositionally biased toward acidic residues: residues 377–397 (ADSDADEDDDDADDTEGEDDG) and 404–415 (AEDSAEDVHDEL). The short motif at 412–415 (HDEL) is the Prevents secretion from ER element.

It belongs to the calreticulin family.

It is found in the endoplasmic reticulum lumen. Its function is as follows. Molecular calcium-binding chaperone promoting folding, oligomeric assembly and quality control in the ER via the calreticulin/calnexin cycle. This lectin may interact transiently with almost all of the monoglucosylated glycoproteins that are synthesized in the ER. This Ricinus communis (Castor bean) protein is Calreticulin.